The sequence spans 524 residues: Ribosomal protein uS12 methylthiotransferase RimO (524 aa).

The span at 20 to 31 (NSQTASDSTQPA) shows a compositional bias: polar residues. The interval 20–59 (NSQTASDSTQPAASAYHHKANHNQNRSIEQSAQQAAEQSL) is disordered. The span at 48–58 (EQSAQQAAEQS) shows a compositional bias: low complexity. Positions 67-177 (PKVGFVSLGC…VITAVSTHAP (111 aa)) constitute an MTTase N-terminal domain. Positions 76, 112, 141, 216, 220, and 223 each coordinate [4Fe-4S] cluster. The Radical SAM core domain occupies 202–443 (LTPSHYAYLK…MAVQQQISEQ (242 aa)). A TRAM domain is found at 446-519 (QEKVGKTMTV…EYDLFASYDA (74 aa)).

The protein belongs to the methylthiotransferase family. RimO subfamily. Requires [4Fe-4S] cluster as cofactor.

Its subcellular location is the cytoplasm. It catalyses the reaction L-aspartate(89)-[ribosomal protein uS12]-hydrogen + (sulfur carrier)-SH + AH2 + 2 S-adenosyl-L-methionine = 3-methylsulfanyl-L-aspartate(89)-[ribosomal protein uS12]-hydrogen + (sulfur carrier)-H + 5'-deoxyadenosine + L-methionine + A + S-adenosyl-L-homocysteine + 2 H(+). In terms of biological role, catalyzes the methylthiolation of an aspartic acid residue of ribosomal protein uS12. In Psychrobacter sp. (strain PRwf-1), this protein is Ribosomal protein uS12 methylthiotransferase RimO.